We begin with the raw amino-acid sequence, 571 residues long: Adenine deaminase (571 aa).

It belongs to the metallo-dependent hydrolases superfamily. Adenine deaminase family. Mn(2+) serves as cofactor.

The enzyme catalyses adenine + H2O + H(+) = hypoxanthine + NH4(+). The chain is Adenine deaminase from Dehalococcoides mccartyi (strain CBDB1).